A 241-amino-acid chain; its full sequence is Putative hydrolase 080R (241 aa).

In terms of domain architecture, Nudix hydrolase spans 50–241 (FPDLSFNLMV…VIKVQKIMIL (192 aa)). The Nudix box signature appears at 136-157 (GHCNGNEPVLSTLLREFREETT). Mg(2+) contacts are provided by Glu-151, Glu-155, and Asp-204.

The protein belongs to the Nudix hydrolase family.

In Aedes vexans (Inland floodwater mosquito), this protein is Putative hydrolase 080R.